The sequence spans 152 residues: Transcriptional regulator MraZ (152 aa).

SpoVT-AbrB domains follow at residues 5–52 (ATMV…PLPE) and 81–124 (ASEC…DEQT).

It belongs to the MraZ family. In terms of assembly, forms oligomers.

Its subcellular location is the cytoplasm. It localises to the nucleoid. Negatively regulates its own expression and that of the subsequent genes in the proximal part of the division and cell wall (dcw) gene cluster. Acts by binding directly to DNA. May also regulate the expression of genes outside the dcw cluster. This chain is Transcriptional regulator MraZ, found in Yersinia pestis bv. Antiqua (strain Antiqua).